We begin with the raw amino-acid sequence, 299 residues long: Probable GTP 3',8-cyclase (299 aa).

A Radical SAM core domain is found at leucine 4 to aspartate 229. Arginine 13 provides a ligand contact to GTP. Positions 20 and 24 each coordinate [4Fe-4S] cluster. Tyrosine 26 lines the S-adenosyl-L-methionine pocket. Residue cysteine 27 participates in [4Fe-4S] cluster binding. GTP is bound at residue lysine 61. Glycine 65 contributes to the S-adenosyl-L-methionine binding site. GTP is bound at residue threonine 94. Serine 118 serves as a coordination point for S-adenosyl-L-methionine. Lysine 154 is a GTP binding site. [4Fe-4S] cluster is bound by residues cysteine 245 and cysteine 248. Residue arginine 250 to arginine 252 coordinates GTP. Residue cysteine 262 coordinates [4Fe-4S] cluster.

Belongs to the radical SAM superfamily. MoaA family. The cofactor is [4Fe-4S] cluster.

It carries out the reaction GTP + AH2 + S-adenosyl-L-methionine = (8S)-3',8-cyclo-7,8-dihydroguanosine 5'-triphosphate + 5'-deoxyadenosine + L-methionine + A + H(+). It participates in cofactor biosynthesis; molybdopterin biosynthesis. In terms of biological role, catalyzes the cyclization of GTP to (8S)-3',8-cyclo-7,8-dihydroguanosine 5'-triphosphate. The polypeptide is Probable GTP 3',8-cyclase (Methanococcus aeolicus (strain ATCC BAA-1280 / DSM 17508 / OCM 812 / Nankai-3)).